The primary structure comprises 83 residues: Cytochrome b559 subunit alpha (83 aa).

Residues 21 to 35 (VIHSITIPSLFIAGW) traverse the membrane as a helical segment. Residue His23 coordinates heme.

Belongs to the PsbE/PsbF family. Heterodimer of an alpha subunit and a beta subunit. PSII is composed of 1 copy each of membrane proteins PsbA, PsbB, PsbC, PsbD, PsbE, PsbF, PsbH, PsbI, PsbJ, PsbK, PsbL, PsbM, PsbT, PsbX, PsbY, PsbZ, Psb30/Ycf12, at least 3 peripheral proteins of the oxygen-evolving complex and a large number of cofactors. It forms dimeric complexes. Heme b serves as cofactor.

The protein resides in the plastid. It localises to the chloroplast thylakoid membrane. This b-type cytochrome is tightly associated with the reaction center of photosystem II (PSII). PSII is a light-driven water:plastoquinone oxidoreductase that uses light energy to abstract electrons from H(2)O, generating O(2) and a proton gradient subsequently used for ATP formation. It consists of a core antenna complex that captures photons, and an electron transfer chain that converts photonic excitation into a charge separation. The protein is Cytochrome b559 subunit alpha of Daucus carota (Wild carrot).